Consider the following 185-residue polypeptide: Ribosome-recycling factor (185 aa).

The segment at 142-165 (IVKDGDAGEDEGSRAEKELDGLTK) is disordered.

The protein belongs to the RRF family.

Its subcellular location is the cytoplasm. Functionally, responsible for the release of ribosomes from messenger RNA at the termination of protein biosynthesis. May increase the efficiency of translation by recycling ribosomes from one round of translation to another. This chain is Ribosome-recycling factor, found in Renibacterium salmoninarum (strain ATCC 33209 / DSM 20767 / JCM 11484 / NBRC 15589 / NCIMB 2235).